Here is a 619-residue protein sequence, read N- to C-terminus: P-granule-associated protein deps-1 (619 aa).

The tract at residues 62-101 is required for prg-1 binding; sequence NFDNIEEAKNLERRSKIPLKFGEVILWNESDCDHDKRIIL. 2 stretches are compositionally biased toward low complexity: residues 563 to 592 and 600 to 619; these read SRATSARTTPAGSSIGSRSSIQSRASAATS and GPSSRRTPSGTPQSSTSSRV. A disordered region spans residues 563–619; it reads SRATSARTTPAGSSIGSRSSIQSRASAATSVSSNRFVGPSSRRTPSGTPQSSTSSRV.

Interacts (via N-terminus) with prg-1; the interaction is direct. May interact with edg-1. In terms of tissue distribution, expressed in germ cells.

It is found in the cytoplasmic granule. Its subcellular location is the cytoplasm. The protein resides in the perinuclear region. Component of P-granules which is required for P-granule formation and integrity in adult germ cells. Promotes the accumulation of glh-1 mRNA and localization of pgl-1 to P-granules. Involved in RNA-mediated gene silencing (RNAi) in the germline. In particular, it is required for piwi-interacting RNA (piRNA) gene silencing and positively regulates the formation of secondary 22G-RNAs, which are RNA-dependent RNA polymerase-derived endo-siRNAs, typically 22 nucleotides in length with a 5'guanosine residue. Its role in RNAi may also be through positively regulating the expression of the dsRNA-binding protein rde-4. Plays a role in small RNA-directed transgenerational epigenetic inheritance. The sequence is that of P-granule-associated protein deps-1 from Caenorhabditis elegans.